The chain runs to 685 residues: Methionine--tRNA ligase (685 aa).

Residues proline 12–histidine 22 carry the 'HIGH' region motif. Zn(2+) is bound by residues cysteine 143, cysteine 146, cysteine 156, and cysteine 159. The 'KMSKS' region signature appears at lysine 339–serine 343. Lysine 342 provides a ligand contact to ATP. The tRNA-binding domain occupies aspartate 582–glycine 685.

It belongs to the class-I aminoacyl-tRNA synthetase family. MetG type 1 subfamily. Homodimer. Zn(2+) is required as a cofactor.

It localises to the cytoplasm. The catalysed reaction is tRNA(Met) + L-methionine + ATP = L-methionyl-tRNA(Met) + AMP + diphosphate. Is required not only for elongation of protein synthesis but also for the initiation of all mRNA translation through initiator tRNA(fMet) aminoacylation. The sequence is that of Methionine--tRNA ligase from Neisseria meningitidis serogroup C (strain 053442).